The following is a 90-amino-acid chain: Carboxysome shell vertex protein CsoS4A (90 aa).

The region spanning 1-78 (MKIYKVDKTL…SDLTIVGIID (78 aa)) is the BMV domain.

This sequence belongs to the CcmL/EutN family. CsoS4 subfamily. Homopentamer.

It is found in the carboxysome. Probably forms vertices in the carboxysome, a polyhedral inclusion where RuBisCO (ribulose bisphosphate carboxylase, cbbL-cbbS) is sequestered. Has been modeled to induce curvature upon insertion into an otherwise flat hexagonal layer of major carboxysome subunits. This Hydrogenovibrio crunogenus (strain DSM 25203 / XCL-2) (Thiomicrospira crunogena) protein is Carboxysome shell vertex protein CsoS4A.